A 505-amino-acid chain; its full sequence is MASLLHLLLLSLSLLVLASASPSPPADEGSYIGVNIGTDLSDMPHPTQVVALLKAQEIRHIRLYNADPGLLIALANTGIKVIISIPNDQLLGIGQSNSTAANWVKRNVIAHYPATMITAVSVGSEVLTSLSNAAPVLVSAIKNVHAALLSANLDKLIKVSTPLSTSLILDPFPPSQAFFNRSLNAVIVPLLSFLQSTNSYLMVNVYPYIDYMQSNGVIPLDYALFKPIPPNKEAVDANTLVRYSNAFDAMVDATYFAMAFLNFTNIPVLVTESGWPSKGETNEPDATLDNANTYNSNLIRHVLNKTGTPKRPGIAVSTYIYELYNEDTKAGLSEKNWGLFNANGEPVYVLRLTNSGSVLANDTTNQTYCTAREGADTKMLQAALDWACGPGKIDCSPIKQGETCYEPDNVVAHANYAFDTYYHQTGNNPDACNFNGVASITTTDPSHGTCVFAGSRGNGRNGTSVNITAPSANSTTSSGIRSDLYYSRGIWSILTVMILNVANIL.

An N-terminal signal peptide occupies residues 1–20 (MASLLHLLLLSLSLLVLASA). Asn97 carries N-linked (GlcNAc...) asparagine glycosylation. Glu125 functions as the Proton donor in the catalytic mechanism. N-linked (GlcNAc...) asparagine glycosylation is found at Asn180 and Asn262. Glu272 (nucleophile) is an active-site residue. 3 N-linked (GlcNAc...) asparagine glycosylation sites follow: Asn304, Asn361, and Asn365. Cys369 and Cys432 are disulfide-bonded. N-linked (GlcNAc...) asparagine glycans are attached at residues Asn461, Asn466, and Asn473. A lipid anchor (GPI-anchor amidated serine) is attached at Ser477. A propeptide spans 478–505 (SGIRSDLYYSRGIWSILTVMILNVANIL) (removed in mature form).

It belongs to the glycosyl hydrolase 17 family. Contains two additional disulfide bonds.

The protein localises to the cell membrane. It catalyses the reaction Hydrolysis of (1-&gt;3)-beta-D-glucosidic linkages in (1-&gt;3)-beta-D-glucans.. The protein is Glucan endo-1,3-beta-glucosidase 2 of Arabidopsis thaliana (Mouse-ear cress).